The sequence spans 82 residues: Immediate early response 3-interacting protein 1 (82 aa).

2 helical membrane passes run 2–22 (AFTL…IAVL) and 62–82 (VMRV…LLFG).

This sequence belongs to the YOS1 family.

It localises to the endoplasmic reticulum membrane. Functionally, regulator of endoplasmic reticulum secretion that acts as a key determinant of brain size. Required for secretion of extracellular matrix proteins. Required for correct brain development by depositing sufficient extracellular matrix proteins for tissue integrity and the proliferation of neural progenitors. Acts as a regulator of the unfolded protein response (UPR). In Rattus norvegicus (Rat), this protein is Immediate early response 3-interacting protein 1.